A 159-amino-acid chain; its full sequence is Phosphopantetheine adenylyltransferase (159 aa).

Residue Thr-10 participates in substrate binding. Residues 10–11 (TF) and His-18 each bind ATP. Residues Lys-42, Met-74, and Arg-88 each contribute to the substrate site. Residues 89–91 (GLR), Glu-99, and 124–130 (WSFISSS) contribute to the ATP site.

The protein belongs to the bacterial CoaD family. Homohexamer. Requires Mg(2+) as cofactor.

The protein localises to the cytoplasm. The catalysed reaction is (R)-4'-phosphopantetheine + ATP + H(+) = 3'-dephospho-CoA + diphosphate. It participates in cofactor biosynthesis; coenzyme A biosynthesis; CoA from (R)-pantothenate: step 4/5. Its function is as follows. Reversibly transfers an adenylyl group from ATP to 4'-phosphopantetheine, yielding dephospho-CoA (dPCoA) and pyrophosphate. The protein is Phosphopantetheine adenylyltransferase of Salmonella agona (strain SL483).